A 240-amino-acid polypeptide reads, in one-letter code: Phosphoribosylaminoimidazole-succinocarboxamide synthase (240 aa).

Belongs to the SAICAR synthetase family.

It catalyses the reaction 5-amino-1-(5-phospho-D-ribosyl)imidazole-4-carboxylate + L-aspartate + ATP = (2S)-2-[5-amino-1-(5-phospho-beta-D-ribosyl)imidazole-4-carboxamido]succinate + ADP + phosphate + 2 H(+). It participates in purine metabolism; IMP biosynthesis via de novo pathway; 5-amino-1-(5-phospho-D-ribosyl)imidazole-4-carboxamide from 5-amino-1-(5-phospho-D-ribosyl)imidazole-4-carboxylate: step 1/2. This Wolbachia sp. subsp. Drosophila simulans (strain wRi) protein is Phosphoribosylaminoimidazole-succinocarboxamide synthase.